The following is a 356-amino-acid chain: L-Lys-D/L-Arg epimerase (356 aa).

Residues threonine 135 and 160–162 (KVK) contribute to the substrate site. Mg(2+) contacts are provided by aspartate 190, glutamate 216, and aspartate 241. Substrate is bound by residues lysine 266, aspartate 296, and 319 to 321 (DLD).

It belongs to the mandelate racemase/muconate lactonizing enzyme family. It depends on Mg(2+) as a cofactor.

In terms of biological role, catalyzes the epimerization of L-Lys-L-Arg to L-Lys-D-Arg. Can also catalyze the epimerization of other cationic dipeptides, such as L-Arg-L-Arg, L-Lys-L-Lys and L-Lys-L-His, but with lower efficiency (in vitro). This Methylococcus capsulatus (strain ATCC 33009 / NCIMB 11132 / Bath) protein is L-Lys-D/L-Arg epimerase.